The following is a 339-amino-acid chain: Thermospermine synthase ACAULIS5 (339 aa).

Positions 33-270 (CHWYEETIDD…DTWGWVMASD (238 aa)) constitute a PABS domain. Residues Gln62, Glu117, Asp137, and 168–169 (DA) each bind S-adenosyl 3-(methylsulfanyl)propylamine. Catalysis depends on Asp186, which acts as the Proton acceptor.

It belongs to the spermidine/spermine synthase family. In terms of tissue distribution, highly expressed in stem internodes and roots. Lower levels in young seedlings before flowering and rosette leaves. Expressed in the vascular tissues. Restricted to procambial and/or provascular cells during primary root development and early leaves development.

It catalyses the reaction S-adenosyl 3-(methylsulfanyl)propylamine + spermidine = thermospermine + S-methyl-5'-thioadenosine + H(+). Its function is as follows. Required for correct xylem specification through regulation of the lifetime of the xylem elements. Prevents premature death of the xylem vessel elements. This is Thermospermine synthase ACAULIS5 (ACL5) from Arabidopsis thaliana (Mouse-ear cress).